A 277-amino-acid chain; its full sequence is Phosphatidylglycerol--prolipoprotein diacylglyceryl transferase (277 aa).

The next 4 helical transmembrane spans lie at 22-42 (WYGVIIASAVVIALLLALSEA), 51-71 (IIVDLLIWAIPISIISARIYY), 89-109 (IWHGGIAIYGALIGAVLTAII), and 116-136 (ISFWQLADVVAPSLIIAQAIG). Arginine 137 is an a 1,2-diacyl-sn-glycero-3-phospho-(1'-sn-glycerol) binding site. A run of 3 helical transmembrane segments spans residues 177–197 (QPTFLYESLWNVLGFILLLII), 205–225 (GELFLSYVIWYSFGRFFIEGM), and 235–255 (FRVSQVLSLLLIVLSIGLIIY).

The protein belongs to the Lgt family.

It localises to the cell membrane. The catalysed reaction is L-cysteinyl-[prolipoprotein] + a 1,2-diacyl-sn-glycero-3-phospho-(1'-sn-glycerol) = an S-1,2-diacyl-sn-glyceryl-L-cysteinyl-[prolipoprotein] + sn-glycerol 1-phosphate + H(+). It participates in protein modification; lipoprotein biosynthesis (diacylglyceryl transfer). Its function is as follows. Catalyzes the transfer of the diacylglyceryl group from phosphatidylglycerol to the sulfhydryl group of the N-terminal cysteine of a prolipoprotein, the first step in the formation of mature lipoproteins. This is Phosphatidylglycerol--prolipoprotein diacylglyceryl transferase from Listeria welshimeri serovar 6b (strain ATCC 35897 / DSM 20650 / CCUG 15529 / CIP 8149 / NCTC 11857 / SLCC 5334 / V8).